A 253-amino-acid chain; its full sequence is 5'-nucleotidase SurE (253 aa).

Asp-8, Asp-9, Ser-39, and Asn-92 together coordinate a divalent metal cation.

Belongs to the SurE nucleotidase family. Requires a divalent metal cation as cofactor.

It is found in the cytoplasm. It carries out the reaction a ribonucleoside 5'-phosphate + H2O = a ribonucleoside + phosphate. In terms of biological role, nucleotidase that shows phosphatase activity on nucleoside 5'-monophosphates. The sequence is that of 5'-nucleotidase SurE from Burkholderia thailandensis (strain ATCC 700388 / DSM 13276 / CCUG 48851 / CIP 106301 / E264).